The chain runs to 321 residues: Lipoyl synthase (321 aa).

C68, C73, C79, C94, C98, C101, and S308 together coordinate [4Fe-4S] cluster. In terms of domain architecture, Radical SAM core spans 80-297 (FNHGTATFMI…KEIALELGFT (218 aa)).

Belongs to the radical SAM superfamily. Lipoyl synthase family. [4Fe-4S] cluster serves as cofactor.

The protein localises to the cytoplasm. The catalysed reaction is [[Fe-S] cluster scaffold protein carrying a second [4Fe-4S](2+) cluster] + N(6)-octanoyl-L-lysyl-[protein] + 2 oxidized [2Fe-2S]-[ferredoxin] + 2 S-adenosyl-L-methionine + 4 H(+) = [[Fe-S] cluster scaffold protein] + N(6)-[(R)-dihydrolipoyl]-L-lysyl-[protein] + 4 Fe(3+) + 2 hydrogen sulfide + 2 5'-deoxyadenosine + 2 L-methionine + 2 reduced [2Fe-2S]-[ferredoxin]. It participates in protein modification; protein lipoylation via endogenous pathway; protein N(6)-(lipoyl)lysine from octanoyl-[acyl-carrier-protein]: step 2/2. Its function is as follows. Catalyzes the radical-mediated insertion of two sulfur atoms into the C-6 and C-8 positions of the octanoyl moiety bound to the lipoyl domains of lipoate-dependent enzymes, thereby converting the octanoylated domains into lipoylated derivatives. The protein is Lipoyl synthase of Vibrio atlanticus (strain LGP32) (Vibrio splendidus (strain Mel32)).